Here is a 503-residue protein sequence, read N- to C-terminus: MGIKTALPAAELGLYSLVLSGALAYAGRGLLEASQDGAHRKAFRESVRPGWEYLGRKMDVADFEWVMWFTNFRNVIVFALSGHVLFAKLCTMVAPQLRSWMYAVYGVLAVVGTMGPWYLLLLLGHCMVLYVASLLGQRWLCLALGLASLASFKVDPGISWQSGFVTGTFDLQDVLFHGGSSFTVLRCTSFALESCAHPDRRYSLADLLKYNFYLPFFFFGPIMTFDRFHAQVSQEPVRPEGELWHIQAQAGLSAAAIVAVDVFFHFFYILTIPSDLKFASRLPDSALAGLAYSNLVYDWVKAAVLFGVVNTVARLDHLDPPQPPKCITALYVFGETHFDRGINDWLCKYVYDHIGGDHSTVIPELAASVATFVVTTLWLGPCDIVYLWSVLNCFGLNFELWVQKLAERGPLAQIEARLSEQMSRRVRALCGAVNFWAIIMYNLVSLNSLEFTELVARRLILTGFPQTTLAVLFVTYCGVQLVKERERSLALEEEQRQDREKLE.

Transmembrane regions (helical) follow at residues L12 to L31, W65 to A87, W100 to L122, M127 to L149, A250 to I272, L287 to V309, V426 to S445, and I460 to V482.

It belongs to the membrane-bound acyltransferase family. HHAT subfamily. Interacts with SHH.

Its subcellular location is the endoplasmic reticulum membrane. Its function is as follows. Negatively regulates N-terminal palmitoylation of SHH by HHAT/SKN. This Mus musculus (Mouse) protein is Protein-cysteine N-palmitoyltransferase HHAT-like protein (Hhatl).